Reading from the N-terminus, the 272-residue chain is 4-hydroxy-tetrahydrodipicolinate reductase (272 aa).

NAD(+) is bound by residues Gly-10–Met-15, Glu-36, Gly-100–Thr-102, and Ser-124–Met-127. His-157 functions as the Proton donor/acceptor in the catalytic mechanism. A (S)-2,3,4,5-tetrahydrodipicolinate-binding site is contributed by His-158. Lys-161 serves as the catalytic Proton donor. Position 167-168 (Gly-167–Thr-168) interacts with (S)-2,3,4,5-tetrahydrodipicolinate.

It belongs to the DapB family.

It localises to the cytoplasm. It carries out the reaction (S)-2,3,4,5-tetrahydrodipicolinate + NAD(+) + H2O = (2S,4S)-4-hydroxy-2,3,4,5-tetrahydrodipicolinate + NADH + H(+). The catalysed reaction is (S)-2,3,4,5-tetrahydrodipicolinate + NADP(+) + H2O = (2S,4S)-4-hydroxy-2,3,4,5-tetrahydrodipicolinate + NADPH + H(+). It participates in amino-acid biosynthesis; L-lysine biosynthesis via DAP pathway; (S)-tetrahydrodipicolinate from L-aspartate: step 4/4. In terms of biological role, catalyzes the conversion of 4-hydroxy-tetrahydrodipicolinate (HTPA) to tetrahydrodipicolinate. The chain is 4-hydroxy-tetrahydrodipicolinate reductase from Afipia carboxidovorans (strain ATCC 49405 / DSM 1227 / KCTC 32145 / OM5) (Oligotropha carboxidovorans).